The sequence spans 249 residues: Glucosamine-6-phosphate deaminase (249 aa).

Aspartate 67 serves as the catalytic Proton acceptor; for enolization step. Catalysis depends on asparagine 136, which acts as the For ring-opening step. Histidine 138 functions as the Proton acceptor; for ring-opening step in the catalytic mechanism. Glutamate 143 acts as the For ring-opening step in catalysis.

This sequence belongs to the glucosamine/galactosamine-6-phosphate isomerase family. NagB subfamily.

It carries out the reaction alpha-D-glucosamine 6-phosphate + H2O = beta-D-fructose 6-phosphate + NH4(+). The protein operates within amino-sugar metabolism; N-acetylneuraminate degradation; D-fructose 6-phosphate from N-acetylneuraminate: step 5/5. Catalyzes the reversible isomerization-deamination of glucosamine 6-phosphate (GlcN6P) to form fructose 6-phosphate (Fru6P) and ammonium ion. The protein is Glucosamine-6-phosphate deaminase of Clostridium botulinum (strain Eklund 17B / Type B).